Here is a 304-residue protein sequence, read N- to C-terminus: HPr kinase/phosphorylase (304 aa).

Catalysis depends on residues H136 and K157. Position 151 to 158 (151 to 158 (GESGIGKS)) interacts with ATP. Position 158 (S158) interacts with Mg(2+). D175 functions as the Proton acceptor; for phosphorylation activity. Proton donor; for dephosphorylation activity in the catalytic mechanism. Residues 198–207 (LEVRGIGIID) are important for the catalytic mechanism of both phosphorylation and dephosphorylation. Residue E199 participates in Mg(2+) binding. R240 is an active-site residue. Positions 261 to 266 (PVRPGR) are important for the catalytic mechanism of dephosphorylation.

Belongs to the HPrK/P family. In terms of assembly, homohexamer. It depends on Mg(2+) as a cofactor.

The catalysed reaction is [HPr protein]-L-serine + ATP = [HPr protein]-O-phospho-L-serine + ADP + H(+). The enzyme catalyses [HPr protein]-O-phospho-L-serine + phosphate + H(+) = [HPr protein]-L-serine + diphosphate. Its function is as follows. Catalyzes the ATP- as well as the pyrophosphate-dependent phosphorylation of a specific serine residue in HPr, a phosphocarrier protein of the phosphoenolpyruvate-dependent sugar phosphotransferase system (PTS). HprK/P also catalyzes the pyrophosphate-producing, inorganic phosphate-dependent dephosphorylation (phosphorolysis) of seryl-phosphorylated HPr (P-Ser-HPr). The two antagonistic activities of HprK/P are regulated by several intracellular metabolites, which change their concentration in response to the absence or presence of rapidly metabolisable carbon sources (glucose, fructose, etc.) in the growth medium. Therefore, by controlling the phosphorylation state of HPr, HPrK/P is a sensor enzyme that plays a major role in the regulation of carbon metabolism and sugar transport: it mediates carbon catabolite repression (CCR), and regulates PTS-catalyzed carbohydrate uptake and inducer exclusion. This chain is HPr kinase/phosphorylase, found in Clostridium botulinum (strain Alaska E43 / Type E3).